The following is a 142-amino-acid chain: DNA-directed RNA polymerase subunit omega (142 aa).

Positions 93–142 (AWSVPEAGGDEGGDASELLDDEGEGAAAGAEPDFSEMDVPLADLADEDKI) are disordered. A compositionally biased stretch (acidic residues) spans 100–116 (GGDEGGDASELLDDEGE).

The protein belongs to the RNA polymerase subunit omega family. In terms of assembly, the RNAP catalytic core consists of 2 alpha, 1 beta, 1 beta' and 1 omega subunit. When a sigma factor is associated with the core the holoenzyme is formed, which can initiate transcription.

It carries out the reaction RNA(n) + a ribonucleoside 5'-triphosphate = RNA(n+1) + diphosphate. Promotes RNA polymerase assembly. Latches the N- and C-terminal regions of the beta' subunit thereby facilitating its interaction with the beta and alpha subunits. This is DNA-directed RNA polymerase subunit omega from Rhodospirillum centenum (strain ATCC 51521 / SW).